The sequence spans 142 residues: Large ribosomal subunit protein uL13 (142 aa).

The protein belongs to the universal ribosomal protein uL13 family. In terms of assembly, part of the 50S ribosomal subunit.

Functionally, this protein is one of the early assembly proteins of the 50S ribosomal subunit, although it is not seen to bind rRNA by itself. It is important during the early stages of 50S assembly. In Thermococcus kodakarensis (strain ATCC BAA-918 / JCM 12380 / KOD1) (Pyrococcus kodakaraensis (strain KOD1)), this protein is Large ribosomal subunit protein uL13.